The primary structure comprises 661 residues: Lateral signaling target protein 2 (661 aa).

The interval 294–432 is disordered; that stretch reads VPEDTSSTLT…SDDEITDDVQ (139 aa). The span at 297–310 shows a compositional bias: polar residues; it reads DTSSTLTMSDFRTN. Composition is skewed to low complexity over residues 330 to 360 and 381 to 393; these read SDST…SPHS and TNSN…TESP. The span at 394–411 shows a compositional bias: acidic residues; sequence ETIEEPDNVDMEESSESE. Residues 412–422 show a composition bias toward basic and acidic residues; it reads VDTHIDETRNE. Residues 566–626 form an FYVE-type zinc finger; the sequence is DEDCEQCTAC…VCNLCYVHRL (61 aa). Zn(2+) is bound by residues Cys572, Cys575, Cys588, Cys591, Cys596, Cys599, Cys618, and Cys621. Over residues 641-650 the composition is skewed to polar residues; the sequence is NGATVPSVTE. The disordered stretch occupies residues 641 to 661; sequence NGATVPSVTEQQSAQTASASS. Residues 651–661 are compositionally biased toward low complexity; the sequence is QQSAQTASASS.

It belongs to the lst-2 family. Expressed in vulval precursor cells (VPCs).

Its function is as follows. Negative regulator of epidermal growth factor receptor (EGFR) signaling. In Caenorhabditis elegans, this protein is Lateral signaling target protein 2 (lst-2).